Reading from the N-terminus, the 98-residue chain is NADH-ubiquinone oxidoreductase chain 4L (98 aa).

3 helical membrane-spanning segments follow: residues 1–21 (MTLI…GLLM), 29–49 (ALLC…LTIL), and 61–81 (IILL…LVMV).

It belongs to the complex I subunit 4L family. Core subunit of respiratory chain NADH dehydrogenase (Complex I) which is composed of 45 different subunits.

It is found in the mitochondrion inner membrane. It carries out the reaction a ubiquinone + NADH + 5 H(+)(in) = a ubiquinol + NAD(+) + 4 H(+)(out). Its function is as follows. Core subunit of the mitochondrial membrane respiratory chain NADH dehydrogenase (Complex I) which catalyzes electron transfer from NADH through the respiratory chain, using ubiquinone as an electron acceptor. Part of the enzyme membrane arm which is embedded in the lipid bilayer and involved in proton translocation. In Megaptera novaeangliae (Humpback whale), this protein is NADH-ubiquinone oxidoreductase chain 4L (MT-ND4L).